A 414-amino-acid polypeptide reads, in one-letter code: Ankyrin repeat domain-containing protein 10 (414 aa).

5 ANK repeats span residues 18–47 (TLRF…RSDL), 54–83 (YGWT…SVNA), 88–117 (FAQT…NINK), 121–150 (VGET…QIDL), and 154–187 (SGLT…RYYS). The tract at residues 310–332 (GVTSPSRHRIHTSNGTEEPEKAM) is disordered.

This is Ankyrin repeat domain-containing protein 10 (ANKRD10) from Gallus gallus (Chicken).